A 242-amino-acid polypeptide reads, in one-letter code: Glucosamine-6-phosphate deaminase (242 aa).

Asp67 functions as the Proton acceptor; for enolization step in the catalytic mechanism. The active-site For ring-opening step is the Asn136. The active-site Proton acceptor; for ring-opening step is the His138. Catalysis depends on Glu143, which acts as the For ring-opening step.

Belongs to the glucosamine/galactosamine-6-phosphate isomerase family. NagB subfamily.

It catalyses the reaction alpha-D-glucosamine 6-phosphate + H2O = beta-D-fructose 6-phosphate + NH4(+). The protein operates within amino-sugar metabolism; N-acetylneuraminate degradation; D-fructose 6-phosphate from N-acetylneuraminate: step 5/5. Functionally, catalyzes the reversible isomerization-deamination of glucosamine 6-phosphate (GlcN6P) to form fructose 6-phosphate (Fru6P) and ammonium ion. This chain is Glucosamine-6-phosphate deaminase, found in Clostridium perfringens (strain 13 / Type A).